We begin with the raw amino-acid sequence, 926 residues long: Taz1-interacting factor 1 (926 aa).

Coiled coils occupy residues Arg-461–Asn-496 and Ser-548–Lys-671. Ser-548 carries the post-translational modification Phosphoserine. Thr-550 is subject to Phosphothreonine. At Ser-552 the chain carries Phosphoserine.

It belongs to the ATG11 family. As to quaternary structure, homodimer and potential homooligomers. Interacts with taz1.

It is found in the preautophagosomal structure membrane. Its subcellular location is the vacuole membrane. In terms of biological role, involved in cytoplasm to vacuole transport (Cvt), pexophagy, mitophagy and nucleophagy. Recruits mitochondria for their selective degradation via autophagy (mitophagy) during starvation. Works as scaffold proteins that recruit ATG proteins to the preautophagosome (PAS), the site of vesicle/autophagosome formation. Required for atg9 anterograde transport from the mitochondria to the PAS. Required for nitrogen starvation-induced sexual development and for entering the dormant G0 state. This Schizosaccharomyces pombe (strain 972 / ATCC 24843) (Fission yeast) protein is Taz1-interacting factor 1 (taf1).